The primary structure comprises 189 residues: Peptidyl-tRNA hydrolase (189 aa).

Tyrosine 15 lines the tRNA pocket. The active-site Proton acceptor is histidine 20. Residues tyrosine 65, asparagine 67, and asparagine 113 each contribute to the tRNA site.

The protein belongs to the PTH family. Monomer.

It localises to the cytoplasm. The enzyme catalyses an N-acyl-L-alpha-aminoacyl-tRNA + H2O = an N-acyl-L-amino acid + a tRNA + H(+). Hydrolyzes ribosome-free peptidyl-tRNAs (with 1 or more amino acids incorporated), which drop off the ribosome during protein synthesis, or as a result of ribosome stalling. In terms of biological role, catalyzes the release of premature peptidyl moieties from peptidyl-tRNA molecules trapped in stalled 50S ribosomal subunits, and thus maintains levels of free tRNAs and 50S ribosomes. This chain is Peptidyl-tRNA hydrolase, found in Caldicellulosiruptor saccharolyticus (strain ATCC 43494 / DSM 8903 / Tp8T 6331).